The primary structure comprises 165 residues: Anterior gradient protein 3 (165 aa).

Residues 1–20 (MLHSALALCLLLITVSSNLA) form the signal peptide. Residues 162 to 165 (QSEL) carry the Prevents secretion from ER motif.

The protein belongs to the AGR family. In terms of assembly, interacts with LYPD3 and DAG1 (alphaDAG1). Expressed in the ciliated cells of the airway epithelium. Not detected in the mucous cells.

It localises to the endoplasmic reticulum. Its subcellular location is the cytoplasm. In terms of biological role, required for calcium-mediated regulation of ciliary beat frequency and mucociliary clearance in the airway. Might be involved in the regulation of intracellular calcium in tracheal epithelial cells. The chain is Anterior gradient protein 3 from Mus musculus (Mouse).